The chain runs to 450 residues: Phosphoglucosamine mutase 2 (450 aa).

Residue serine 101 is the Phosphoserine intermediate of the active site. Residues serine 101, aspartate 245, aspartate 247, and aspartate 249 each contribute to the Mg(2+) site. Serine 101 bears the Phosphoserine mark.

This sequence belongs to the phosphohexose mutase family. Mg(2+) is required as a cofactor. Post-translationally, activated by phosphorylation.

It catalyses the reaction alpha-D-glucosamine 1-phosphate = D-glucosamine 6-phosphate. Its function is as follows. Catalyzes the conversion of glucosamine-6-phosphate to glucosamine-1-phosphate. The sequence is that of Phosphoglucosamine mutase 2 from Shewanella frigidimarina (strain NCIMB 400).